The chain runs to 214 residues: tRNA (guanine-N(7)-)-methyltransferase (214 aa).

S-adenosyl-L-methionine is bound by residues E44, E69, D96, and D118. Residue D118 is part of the active site. Substrate-binding positions include K122, D154, and 191–194 (TEYE).

This sequence belongs to the class I-like SAM-binding methyltransferase superfamily. TrmB family.

The catalysed reaction is guanosine(46) in tRNA + S-adenosyl-L-methionine = N(7)-methylguanosine(46) in tRNA + S-adenosyl-L-homocysteine. Its pathway is tRNA modification; N(7)-methylguanine-tRNA biosynthesis. In terms of biological role, catalyzes the formation of N(7)-methylguanine at position 46 (m7G46) in tRNA. The chain is tRNA (guanine-N(7)-)-methyltransferase from Listeria welshimeri serovar 6b (strain ATCC 35897 / DSM 20650 / CCUG 15529 / CIP 8149 / NCTC 11857 / SLCC 5334 / V8).